The sequence spans 122 residues: Large ribosomal subunit protein uL14 (122 aa).

This sequence belongs to the universal ribosomal protein uL14 family. Part of the 50S ribosomal subunit. Forms a cluster with proteins L3 and L19. In the 70S ribosome, L14 and L19 interact and together make contacts with the 16S rRNA in bridges B5 and B8.

Binds to 23S rRNA. Forms part of two intersubunit bridges in the 70S ribosome. The chain is Large ribosomal subunit protein uL14 from Leptothrix cholodnii (strain ATCC 51168 / LMG 8142 / SP-6) (Leptothrix discophora (strain SP-6)).